The sequence spans 170 residues: Adenine phosphoribosyltransferase (170 aa).

The protein belongs to the purine/pyrimidine phosphoribosyltransferase family. As to quaternary structure, homodimer.

The protein localises to the cytoplasm. It carries out the reaction AMP + diphosphate = 5-phospho-alpha-D-ribose 1-diphosphate + adenine. It functions in the pathway purine metabolism; AMP biosynthesis via salvage pathway; AMP from adenine: step 1/1. Functionally, catalyzes a salvage reaction resulting in the formation of AMP, that is energically less costly than de novo synthesis. The protein is Adenine phosphoribosyltransferase of Bacillus cereus (strain G9842).